Consider the following 275-residue polypeptide: Release factor glutamine methyltransferase (275 aa).

S-adenosyl-L-methionine contacts are provided by residues 114 to 118, Asp-137, Trp-165, and Asn-180; that span reads GTGSG. 180–183 serves as a coordination point for substrate; the sequence is NPPY.

It belongs to the protein N5-glutamine methyltransferase family. PrmC subfamily.

The catalysed reaction is L-glutaminyl-[peptide chain release factor] + S-adenosyl-L-methionine = N(5)-methyl-L-glutaminyl-[peptide chain release factor] + S-adenosyl-L-homocysteine + H(+). Its function is as follows. Methylates the class 1 translation termination release factors RF1/PrfA and RF2/PrfB on the glutamine residue of the universally conserved GGQ motif. This is Release factor glutamine methyltransferase from Xylella fastidiosa (strain 9a5c).